Consider the following 268-residue polypeptide: Probable histidine-binding protein (268 aa).

Residues 1–20 form the signal peptide; that stretch reads MNMKKWIAAALACSALALSA. Residue Cys-21 is the site of N-palmitoyl cysteine attachment. Cys-21 carries the S-diacylglycerol cysteine lipid modification.

The protein belongs to the bacterial solute-binding protein 3 family.

Its subcellular location is the cell membrane. Involved in histidine transport. This Neisseria gonorrhoeae protein is Probable histidine-binding protein (hisJ).